Here is a 510-residue protein sequence, read N- to C-terminus: Light-independent protochlorophyllide reductase subunit B (510 aa).

Asp-36 is a [4Fe-4S] cluster binding site. Asp-297 functions as the Proton donor in the catalytic mechanism. Gly-432–Met-433 lines the substrate pocket.

It belongs to the ChlB/BchB/BchZ family. In terms of assembly, protochlorophyllide reductase is composed of three subunits; ChlL, ChlN and ChlB. Forms a heterotetramer of two ChlB and two ChlN subunits. The cofactor is [4Fe-4S] cluster.

It is found in the plastid. Its subcellular location is the chloroplast. It carries out the reaction chlorophyllide a + oxidized 2[4Fe-4S]-[ferredoxin] + 2 ADP + 2 phosphate = protochlorophyllide a + reduced 2[4Fe-4S]-[ferredoxin] + 2 ATP + 2 H2O. Its pathway is porphyrin-containing compound metabolism; chlorophyll biosynthesis (light-independent). In terms of biological role, component of the dark-operative protochlorophyllide reductase (DPOR) that uses Mg-ATP and reduced ferredoxin to reduce ring D of protochlorophyllide (Pchlide) to form chlorophyllide a (Chlide). This reaction is light-independent. The NB-protein (ChlN-ChlB) is the catalytic component of the complex. This is Light-independent protochlorophyllide reductase subunit B from Pinus koraiensis (Korean pine).